Consider the following 419-residue polypeptide: Maltoporin 2 (419 aa).

Positions 1-23 (MKTSLRTLSVALAAALVSPSVLA) are cleaved as a signal peptide.

It belongs to the porin LamB (TC 1.B.3) family. As to quaternary structure, homotrimer formed of three 18-stranded antiparallel beta-barrels, containing three independent channels.

It is found in the cell outer membrane. It catalyses the reaction beta-maltose(in) = beta-maltose(out). In terms of biological role, involved in the transport of maltose and maltodextrins. In Yersinia pestis bv. Antiqua (strain Antiqua), this protein is Maltoporin 2.